The following is a 297-amino-acid chain: Tryptophan 2,3-dioxygenase (297 aa).

Substrate contacts are provided by residues 51 to 55 (FIIQH), Tyr-113, and Arg-117. His-240 contacts heme. Thr-254 contacts substrate.

It belongs to the tryptophan 2,3-dioxygenase family. Homotetramer. Heme is required as a cofactor.

The catalysed reaction is L-tryptophan + O2 = N-formyl-L-kynurenine. The protein operates within amino-acid degradation; L-tryptophan degradation via kynurenine pathway; L-kynurenine from L-tryptophan: step 1/2. In terms of biological role, heme-dependent dioxygenase that catalyzes the oxidative cleavage of the L-tryptophan (L-Trp) pyrrole ring and converts L-tryptophan to N-formyl-L-kynurenine. Catalyzes the oxidative cleavage of the indole moiety. This chain is Tryptophan 2,3-dioxygenase, found in Xanthomonas oryzae pv. oryzae (strain MAFF 311018).